A 596-amino-acid chain; its full sequence is Fumarate reductase (cytochrome) (596 aa).

The first 25 residues, 1-25 (MKKMNLAVCIATLMGTAGLMGTAVA), serve as a signal peptide directing secretion. Residues histidine 33, cysteine 39, cysteine 42, histidine 43, cysteine 61, cysteine 64, histidine 65, histidine 83, histidine 86, cysteine 93, cysteine 96, histidine 97, alanine 99, histidine 100, cysteine 107, cysteine 110, and histidine 111 each coordinate heme c. Residues 143–596 (ALASAPHDTV…EEAAKYSKKN (454 aa)) form a flavoprotein-like region. 8 residues coordinate FAD: alanine 162, glutamate 181, asparagine 189, alanine 194, glycine 195, glycine 196, glycine 303, and aspartate 369. Glycine 195 serves as a coordination point for fumarate. Residue glycine 195 coordinates succinate. Tyrosine 386 lines the heme c pocket. Residues histidine 390, threonine 402, and glutamate 403 each coordinate succinate. Fumarate contacts are provided by threonine 402 and glutamate 403. Residue arginine 427 is the Proton donor of the active site. A fumarate-binding site is contributed by histidine 529. Histidine 529 is a succinate binding site. FAD is bound by residues histidine 530 and glutamate 559. Fumarate-binding residues include arginine 569 and glycine 572. The succinate site is built by arginine 569 and glycine 572. The FAD site is built by alanine 574 and isoleucine 575.

The protein in the C-terminal section; belongs to the FAD-dependent oxidoreductase 2 family. FRD/SDH subfamily. As to quaternary structure, monomer. It depends on FAD as a cofactor. Heme c serves as cofactor.

The protein localises to the periplasm. The enzyme catalyses 2 Fe(III)-[cytochrome c] + succinate = fumarate + 2 Fe(II)-[cytochrome c] + 2 H(+). With respect to regulation, mesaconic acid is a competitive inhibitor of fumarate reduction. Its function is as follows. Flavocytochrome that catalyzes the reduction of fumarate to succinate. Is essential for fumarate respiration during anaerobic growth, acting as the terminal reductase. Receives electrons from the membrane-bound tetraheme c-type cytochrome CymA. Is essentially unidirectional, catalyzing only fumarate reduction. Cannot reduce nitrite, dimethylsulphoxide, trimethylamine-N-oxide (TMAO) or sulfite. In vitro, can use the artificial electron donor methyl viologen. The protein is Fumarate reductase (cytochrome) of Shewanella frigidimarina (strain NCIMB 400).